A 452-amino-acid chain; its full sequence is Phosphoglucosamine mutase (452 aa).

The active-site Phosphoserine intermediate is the S101. The Mg(2+) site is built by S101, D241, D243, and D245. S101 is modified (phosphoserine).

It belongs to the phosphohexose mutase family. Requires Mg(2+) as cofactor. Post-translationally, activated by phosphorylation.

It carries out the reaction alpha-D-glucosamine 1-phosphate = D-glucosamine 6-phosphate. Catalyzes the conversion of glucosamine-6-phosphate to glucosamine-1-phosphate. The polypeptide is Phosphoglucosamine mutase (Lactococcus lactis subsp. cremoris (strain MG1363)).